We begin with the raw amino-acid sequence, 130 residues long: Small ribosomal subunit protein uS8 (130 aa).

Belongs to the universal ribosomal protein uS8 family. As to quaternary structure, part of the 30S ribosomal subunit. Contacts proteins S5 and S12.

One of the primary rRNA binding proteins, it binds directly to 16S rRNA central domain where it helps coordinate assembly of the platform of the 30S subunit. This Klebsiella pneumoniae (strain 342) protein is Small ribosomal subunit protein uS8.